A 254-amino-acid polypeptide reads, in one-letter code: Phosphoribosylaminoimidazole-succinocarboxamide synthase (254 aa).

It belongs to the SAICAR synthetase family.

It catalyses the reaction 5-amino-1-(5-phospho-D-ribosyl)imidazole-4-carboxylate + L-aspartate + ATP = (2S)-2-[5-amino-1-(5-phospho-beta-D-ribosyl)imidazole-4-carboxamido]succinate + ADP + phosphate + 2 H(+). It participates in purine metabolism; IMP biosynthesis via de novo pathway; 5-amino-1-(5-phospho-D-ribosyl)imidazole-4-carboxamide from 5-amino-1-(5-phospho-D-ribosyl)imidazole-4-carboxylate: step 1/2. The chain is Phosphoribosylaminoimidazole-succinocarboxamide synthase from Acidiphilium cryptum (strain JF-5).